Reading from the N-terminus, the 301-residue chain is Acetylglutamate kinase (301 aa).

Substrate-binding positions include 68 to 69, Arg90, and Asn195; that span reads GG.

Belongs to the acetylglutamate kinase family. ArgB subfamily.

It is found in the cytoplasm. The catalysed reaction is N-acetyl-L-glutamate + ATP = N-acetyl-L-glutamyl 5-phosphate + ADP. It participates in amino-acid biosynthesis; L-arginine biosynthesis; N(2)-acetyl-L-ornithine from L-glutamate: step 2/4. In terms of biological role, catalyzes the ATP-dependent phosphorylation of N-acetyl-L-glutamate. This Pseudomonas savastanoi pv. phaseolicola (strain 1448A / Race 6) (Pseudomonas syringae pv. phaseolicola (strain 1448A / Race 6)) protein is Acetylglutamate kinase.